Here is a 420-residue protein sequence, read N- to C-terminus: UPF0229 protein LPC_3097 (420 aa).

The interval 83-107 (IAGDRIKRPGGGAGGAGGNASDSGE) is disordered. The segment covering 91-100 (PGGGAGGAGG) has biased composition (gly residues).

This sequence belongs to the UPF0229 family.

The chain is UPF0229 protein LPC_3097 from Legionella pneumophila (strain Corby).